The following is a 401-amino-acid chain: Argininosuccinate synthase (401 aa).

9–17 (AYSGGLDTS) is a binding site for ATP. Residue Tyr86 participates in L-citrulline binding. Gly116 is an ATP binding site. Positions 118, 122, and 123 each coordinate L-aspartate. Asn122 is an L-citrulline binding site. L-citrulline-binding residues include Arg126, Ser174, Ser183, Glu259, and Tyr271.

It belongs to the argininosuccinate synthase family. Type 1 subfamily. As to quaternary structure, homotetramer.

It localises to the cytoplasm. The catalysed reaction is L-citrulline + L-aspartate + ATP = 2-(N(omega)-L-arginino)succinate + AMP + diphosphate + H(+). Its pathway is amino-acid biosynthesis; L-arginine biosynthesis; L-arginine from L-ornithine and carbamoyl phosphate: step 2/3. This Bacillus cereus (strain Q1) protein is Argininosuccinate synthase.